The following is a 360-amino-acid chain: Dual-specificity RNA methyltransferase RlmN (360 aa).

Glu93 functions as the Proton acceptor in the catalytic mechanism. Positions 99–326 (EEDRNTLCIS…VITRSSRGAD (228 aa)) constitute a Radical SAM core domain. Cysteines 106 and 331 form a disulfide. Residues Cys113, Cys117, and Cys120 each coordinate [4Fe-4S] cluster. Residues 158 to 159 (GE), Ser190, 212 to 214 (SLN), and Asn288 contribute to the S-adenosyl-L-methionine site. Cys331 (S-methylcysteine intermediate) is an active-site residue.

Belongs to the radical SAM superfamily. RlmN family. [4Fe-4S] cluster serves as cofactor.

The protein resides in the cytoplasm. It carries out the reaction adenosine(2503) in 23S rRNA + 2 reduced [2Fe-2S]-[ferredoxin] + 2 S-adenosyl-L-methionine = 2-methyladenosine(2503) in 23S rRNA + 5'-deoxyadenosine + L-methionine + 2 oxidized [2Fe-2S]-[ferredoxin] + S-adenosyl-L-homocysteine. The enzyme catalyses adenosine(37) in tRNA + 2 reduced [2Fe-2S]-[ferredoxin] + 2 S-adenosyl-L-methionine = 2-methyladenosine(37) in tRNA + 5'-deoxyadenosine + L-methionine + 2 oxidized [2Fe-2S]-[ferredoxin] + S-adenosyl-L-homocysteine. Functionally, specifically methylates position 2 of adenine 2503 in 23S rRNA and position 2 of adenine 37 in tRNAs. m2A2503 modification seems to play a crucial role in the proofreading step occurring at the peptidyl transferase center and thus would serve to optimize ribosomal fidelity. This is Dual-specificity RNA methyltransferase RlmN from Geobacter sulfurreducens (strain ATCC 51573 / DSM 12127 / PCA).